The sequence spans 513 residues: MATLSSYDHFIFTALAFFISGLIFFLKQKSKSKKFNLPPGPPGWPIVGNLFQVARSGKPFFEYVNDVRLKYGSIFTLKMGTRTMIILTDAKLVHEAMIQKGATYATRPPENPTRTIFSENKFTVNAATYGPVWKSLRRNMVQNMLSSTRLKEFRSVRDNAMDKLINRLKDEAEKNNGVVWVLKDARFAVFCILVAMCFGLEMDEETVERIDQVMKSVLITLDPRIDDYLPILSPFFSKQRKKALEVRREQVEFLVPIIEQRRRAIQNPGSDHTATTFSYLDTLFDLKVEGKKSAPSDAELVSLCSEFLNGGTDTTATAVEWGIAQLIANPNVQTKLYEEIKRTVGEKKVDEKDVEKMPYLHAVVKELLRKHPPTHFVLTHAVTEPTTLGGYDIPIDANVEVYTPAIAEDPKNWLNPEKFDPERFISGGEEADITGVTGVKMMPFGVGRRICPGLAMATVHIHLMMARMVQEFEWGAYPPEKKMDFTGKWEFTVVMKESLRATIKPRGGEKVKL.

Residue Cys451 coordinates heme.

Belongs to the cytochrome P450 family. It depends on heme as a cofactor.

In Glycine max (Soybean), this protein is Cytochrome P450 77A3 (CYP77A3).